Here is a 431-residue protein sequence, read N- to C-terminus: MAFSFDLAVIFQRERRMKRKSRVTIRRRRRRDMCKSHEPMPYIPFDLVIEILTRLPAKSLMRFKSVSKLWSSLICSRTFTNRLLRVPSFIQRLYVTLTFLDNSLQRKSKLLSSSSSPGSDISTMSSFVVDRDLTTPSMKGYYLSHVLRGLMCFVKEPSVKIYNTTTRQLVVLPDIEESNIIAEDHKNKKIMYRIGHDPVGDQYKVVCIVARPNDEFGELRRYLSEHWVFILGGDKSSGWRKIPCPSPHLPITQILSINGRMHYLAWVQKFDPMLVTFDFSSEEISILQAPEDIRWFKSNPIEYYGKVALLNLSDLKRECTMNLWVMEDVEKNMWSEKTLVVHPSQMDIVKSTSLRVAGTTRNNEVILVPHNIRYTLTGEVIVEPQNTTLLYIFLYDLQKNLMRKVEIKEPPYHTKFWDVVGLDDVENFMYL.

An F-box domain is found at 37–83; the sequence is HEPMPYIPFDLVIEILTRLPAKSLMRFKSVSKLWSSLICSRTFTNRL. Kelch repeat units lie at residues 143–189 and 227–275; these read LSHV…KNKK and WVFI…PMLV.

This Arabidopsis thaliana (Mouse-ear cress) protein is F-box/kelch-repeat protein At4g19930.